Consider the following 308-residue polypeptide: Ornithine carbamoyltransferase (308 aa).

Carbamoyl phosphate-binding positions include 56–59 (STRT), Q83, R107, and 134–137 (HPCQ). Residues N165, D225, and 229–230 (SM) contribute to the L-ornithine site. Carbamoyl phosphate contacts are provided by residues 266-267 (CL) and R294.

It belongs to the aspartate/ornithine carbamoyltransferase superfamily. OTCase family.

It is found in the cytoplasm. It catalyses the reaction carbamoyl phosphate + L-ornithine = L-citrulline + phosphate + H(+). The protein operates within amino-acid biosynthesis; L-arginine biosynthesis; L-arginine from L-ornithine and carbamoyl phosphate: step 1/3. Functionally, reversibly catalyzes the transfer of the carbamoyl group from carbamoyl phosphate (CP) to the N(epsilon) atom of ornithine (ORN) to produce L-citrulline. The polypeptide is Ornithine carbamoyltransferase (Cereibacter sphaeroides (strain ATCC 17023 / DSM 158 / JCM 6121 / CCUG 31486 / LMG 2827 / NBRC 12203 / NCIMB 8253 / ATH 2.4.1.) (Rhodobacter sphaeroides)).